The sequence spans 184 residues: GMP synthase [glutamine-hydrolyzing] subunit A (184 aa).

The Glutamine amidotransferase type-1 domain maps to 3–184 (HIAVIDNHGQ…VFKNFIARCQ (182 aa)). The active-site Nucleophile is Cys75. Active-site residues include His163 and Glu165.

In terms of assembly, heterodimer composed of a glutamine amidotransferase subunit (A) and a GMP-binding subunit (B).

It carries out the reaction XMP + L-glutamine + ATP + H2O = GMP + L-glutamate + AMP + diphosphate + 2 H(+). It functions in the pathway purine metabolism; GMP biosynthesis; GMP from XMP (L-Gln route): step 1/1. In terms of biological role, catalyzes the synthesis of GMP from XMP. The polypeptide is GMP synthase [glutamine-hydrolyzing] subunit A (Haloquadratum walsbyi (strain DSM 16790 / HBSQ001)).